The sequence spans 475 residues: Putative poly(A) polymerase catalytic subunit (475 aa).

It belongs to the poxviridae poly(A) polymerase catalytic subunit family. Highly divergent.

The protein localises to the virion. It carries out the reaction RNA(n) + ATP = RNA(n)-3'-adenine ribonucleotide + diphosphate. Functionally, polymerase that creates the 3'-poly(A) tail of mRNA's. The chain is Putative poly(A) polymerase catalytic subunit from Ornithodoros (relapsing fever ticks).